We begin with the raw amino-acid sequence, 380 residues long: Anhydro-N-acetylmuramic acid kinase (380 aa).

Residue 9–16 (GTSADGVD) participates in ATP binding.

The protein belongs to the anhydro-N-acetylmuramic acid kinase family.

It carries out the reaction 1,6-anhydro-N-acetyl-beta-muramate + ATP + H2O = N-acetyl-D-muramate 6-phosphate + ADP + H(+). It functions in the pathway amino-sugar metabolism; 1,6-anhydro-N-acetylmuramate degradation. It participates in cell wall biogenesis; peptidoglycan recycling. Functionally, catalyzes the specific phosphorylation of 1,6-anhydro-N-acetylmuramic acid (anhMurNAc) with the simultaneous cleavage of the 1,6-anhydro ring, generating MurNAc-6-P. Is required for the utilization of anhMurNAc either imported from the medium or derived from its own cell wall murein, and thus plays a role in cell wall recycling. This is Anhydro-N-acetylmuramic acid kinase from Synechococcus sp. (strain CC9902).